A 114-amino-acid polypeptide reads, in one-letter code: Large ribosomal subunit protein P2 (114 aa).

Over residues 76–91 the composition is skewed to low complexity; it reads PAAAAAAGGGDSSSAA. The disordered stretch occupies residues 76–114; sequence PAAAAAAGGGDSSSAAKETKKEEPEEEEEDGDMGLSLFD.

It belongs to the eukaryotic ribosomal protein P1/P2 family. P1 and P2 exist as dimers at the large ribosomal subunit. Phosphorylated.

Plays an important role in the elongation step of protein synthesis. The sequence is that of Large ribosomal subunit protein P2 from Eimeria tenella (Coccidian parasite).